Consider the following 258-residue polypeptide: Proteasome subunit beta type-1 (258 aa).

The protein belongs to the peptidase T1B family. In terms of assembly, the 26S proteasome consists of a 20S proteasome core and two 19S regulatory subunits. The 20S proteasome core is composed of 28 subunits that are arranged in four stacked rings, resulting in a barrel-shaped structure. The two end rings are each formed by seven alpha subunits, and the two central rings are each formed by seven beta subunits. The catalytic chamber with the active sites is on the inside of the barrel.

It localises to the cytoplasm. It is found in the nucleus. Functionally, non-catalytic component of the proteasome, a multicatalytic proteinase complex which is characterized by its ability to cleave peptides with Arg, Phe, Tyr, Leu, and Glu adjacent to the leaving group at neutral or slightly basic pH. The proteasome has an ATP-dependent proteolytic activity. This is Proteasome subunit beta type-1 (pbs-6) from Caenorhabditis elegans.